The sequence spans 619 residues: 1-deoxy-D-xylulose-5-phosphate synthase (619 aa).

Residues H63 and 104–106 (GHS) each bind thiamine diphosphate. Residue D136 participates in Mg(2+) binding. Thiamine diphosphate contacts are provided by residues 137–138 (GS), N165, Y272, and E353. Residue N165 coordinates Mg(2+).

This sequence belongs to the transketolase family. DXPS subfamily. Homodimer. The cofactor is Mg(2+). Requires thiamine diphosphate as cofactor.

The catalysed reaction is D-glyceraldehyde 3-phosphate + pyruvate + H(+) = 1-deoxy-D-xylulose 5-phosphate + CO2. It participates in metabolic intermediate biosynthesis; 1-deoxy-D-xylulose 5-phosphate biosynthesis; 1-deoxy-D-xylulose 5-phosphate from D-glyceraldehyde 3-phosphate and pyruvate: step 1/1. Its function is as follows. Catalyzes the acyloin condensation reaction between C atoms 2 and 3 of pyruvate and glyceraldehyde 3-phosphate to yield 1-deoxy-D-xylulose-5-phosphate (DXP). This Wolinella succinogenes (strain ATCC 29543 / DSM 1740 / CCUG 13145 / JCM 31913 / LMG 7466 / NCTC 11488 / FDC 602W) (Vibrio succinogenes) protein is 1-deoxy-D-xylulose-5-phosphate synthase.